A 263-amino-acid chain; its full sequence is uncharacterized protein (263 aa).

13 to 20 is an NADP(+) binding site; that stretch reads TGSTSGIG. Serine 141 lines the substrate pocket. The active-site Proton acceptor is tyrosine 154.

The protein belongs to the short-chain dehydrogenases/reductases (SDR) family.

This is an uncharacterized protein from Bacillus subtilis (strain 168).